Reading from the N-terminus, the 746-residue chain is Polyribonucleotide nucleotidyltransferase (746 aa).

The Mg(2+) site is built by D493 and D499. The KH domain maps to 560–619 (PRIITLQINPEKIGALIGPGGKTIRSITEATGAQIDIEEDGRVYISTADAAAAQQAVAMV). In terms of domain architecture, S1 motif spans 629 to 698 (GDIFLGKVVR…GTGKVSLSRR (70 aa)). Residues 704-746 (ETAEDRRAAGAGRGLRDGGRSSGSERSGDRSPRSDDRPRPRRR) form a disordered region. Composition is skewed to basic and acidic residues over residues 706–722 (AEDR…RDGG) and 729–746 (RSGD…PRRR).

This sequence belongs to the polyribonucleotide nucleotidyltransferase family. The cofactor is Mg(2+).

The protein localises to the cytoplasm. The enzyme catalyses RNA(n+1) + phosphate = RNA(n) + a ribonucleoside 5'-diphosphate. Its function is as follows. Involved in mRNA degradation. Catalyzes the phosphorolysis of single-stranded polyribonucleotides processively in the 3'- to 5'-direction. This Roseiflexus castenholzii (strain DSM 13941 / HLO8) protein is Polyribonucleotide nucleotidyltransferase.